Here is a 517-residue protein sequence, read N- to C-terminus: Beta-glucosidase 1 (517 aa).

The signal sequence occupies residues 1–22 (MEDVLTLITMIVLLLLAFHGFG). Residues Gln-48, His-145, and 190 to 191 (NE) each bind a beta-D-glucoside. Glu-191 (proton donor) is an active-site residue. A disulfide bond links Cys-210 and Cys-217. 2 N-linked (GlcNAc...) asparagine glycosylation sites follow: Asn-216 and Asn-221. 2 residues coordinate a beta-D-glucoside: Tyr-333 and Glu-406. Glu-406 (nucleophile) is an active-site residue. Asn-441 is a glycosylation site (N-linked (GlcNAc...) asparagine). 2 residues coordinate a beta-D-glucoside: Trp-451 and Phe-467. 2 N-linked (GlcNAc...) asparagine glycosylation sites follow: Asn-473 and Asn-512.

The protein belongs to the glycosyl hydrolase 1 family.

The catalysed reaction is Hydrolysis of terminal, non-reducing beta-D-glucosyl residues with release of beta-D-glucose.. This Arabidopsis thaliana (Mouse-ear cress) protein is Beta-glucosidase 1.